The chain runs to 612 residues: MCGIVGAIRAHHNVVDFLTDGLKRLEYRGYDSSGIAVNTDGKIKRVRRVGRVQLMEDAAREKGISGGIGIGHTRWATHGGVTEPNAHPHISGGMIAVVHNGIIENFESERKRLEGLGYRFESQTDTEVIAHSINHEYAQNGGKLFEAVQEAVKRFHGAYAIAVIAQDKPDELVVARMGCPLLVALGDDETFIASDVSAVIAFTRRVAYLEDGDIALLASDGIKRLTDKSGLPAERKVKVSELSLASLELGPYSHFMQKEIHEQPRAIADTAEVFLDGGFIPENFGKNAKSVFESIRSVKILACGTSYYAALTAKYWLESIAKIPSDVEIASEYRYRSVIADPDQLVITISQSGETLDTMEALKYAKSLGHRHSLSICNVMESALPRESSLVLYTRAGAEIGVASTKAFTTQLVALFGLAVTLAKVRGLVSEEDEARYTEELRQLPGSVQHALNLEPQIAAWAQQFAKKTSALFLGRGIHYPIALEGALKLKEITYIHAEAYPAGELKHGPLALVDENMPVVVIAPNDSLLDKVKANMQEVGARGGELFVFADLDSNFNATEGVHVIRAPRHVGELSPVVHTIPVQLLSYHVALARGTDVDKPRNLAKSVTVE.

The active-site Nucleophile; for GATase activity is the cysteine 2. The Glutamine amidotransferase type-2 domain maps to 2–220 (CGIVGAIRAH…DGDIALLASD (219 aa)). SIS domains follow at residues 288-428 (AKSV…VRGL) and 461-602 (WAQQ…VDKP). Catalysis depends on lysine 607, which acts as the For Fru-6P isomerization activity.

Homodimer.

The protein resides in the cytoplasm. It catalyses the reaction D-fructose 6-phosphate + L-glutamine = D-glucosamine 6-phosphate + L-glutamate. Functionally, catalyzes the first step in hexosamine metabolism, converting fructose-6P into glucosamine-6P using glutamine as a nitrogen source. The protein is Glutamine--fructose-6-phosphate aminotransferase [isomerizing] of Neisseria meningitidis serogroup A / serotype 4A (strain DSM 15465 / Z2491).